The chain runs to 123 residues: Small ribosomal subunit protein uS8 (123 aa).

Belongs to the universal ribosomal protein uS8 family. Part of the 30S ribosomal subunit. Contacts proteins S5 and S12.

Its function is as follows. One of the primary rRNA binding proteins, it binds directly to 16S rRNA central domain where it helps coordinate assembly of the platform of the 30S subunit. The protein is Small ribosomal subunit protein uS8 (rpsH) of Carsonella ruddii (strain PV).